The chain runs to 551 residues: Interleukin-2 receptor subunit beta (551 aa).

The signal sequence occupies residues 1–26 (MATLALSWCLPLLILLLPLATSSASA). The Extracellular portion of the chain corresponds to 27-240 (AVNGTSRFTC…TKPAALGKDT (214 aa)). Residues Asn29, Asn43, and Asn71 are each glycosylated (N-linked (GlcNAc...) asparagine). Residues Cys36 and Cys46 are joined by a disulfide bond. A disulfide bridge connects residues Cys74 and Cys86. The 101-residue stretch at 134–234 (APISLQVVHV…QPLAFRTKPA (101 aa)) folds into the Fibronectin type-III domain. Asn149 carries N-linked (GlcNAc...) asparagine glycosylation. A WSXWS motif motif is present at residues 220-224 (WSPWS). The helical transmembrane segment at 241 to 265 (IPWLGHLLVGLSGAFGFIILVYLLI) threads the bilayer. The Cytoplasmic segment spans residues 266–551 (NCRNTGPWLK…LQDQDPTHLV (286 aa)). A Box 1 motif motif is present at residues 278–286 (LKCHTPDPS). 3 disordered regions span residues 389-417 (EEEP…EDDA), 430-484 (FSPS…DLVD), and 496-517 (AGEQ…ARPP).

This sequence belongs to the type I cytokine receptor family. Type 4 subfamily. Non-covalent dimer of an alpha and a beta subunit. IL2R exists in 3 different forms: a high affinity dimer, an intermediate affinity monomer (beta subunit), and a low affinity monomer (alpha subunit). The high and intermediate affinity forms also associate with a gamma subunit. Interacts with SHB upon interleukin stimulation.

The protein localises to the cell membrane. The protein resides in the cell surface. In terms of biological role, receptor for interleukin-2. This beta subunit is involved in receptor mediated endocytosis and transduces the mitogenic signals of IL2. Probably in association with IL15RA, involved in the stimulation of neutrophil phagocytosis by IL15. This Macaca fascicularis (Crab-eating macaque) protein is Interleukin-2 receptor subunit beta (IL2RB).